Here is a 926-residue protein sequence, read N- to C-terminus: Protein O-mannosyl-transferase Tmtc3 (926 aa).

The interval 1 to 26 (MSTNPNPGIHQYAPSTLPREREREGA) is disordered. Topologically, residues 1-36 (MSTNPNPGIHQYAPSTLPREREREGATNSPQRNLLE) are cytoplasmic. The helical transmembrane segment at 37-57 (FLCICVACIVCYYNSTQCGLV) threads the bilayer. Topologically, residues 58 to 114 (FDDISAIRDNKDLRPHTPLINVFLNDFWGTPMRKEQSHKSYRPLTVLTFRFNYLLHA) are extracellular. The chain crosses the membrane as a helical span at residues 115–135 (LEPFGYHLVNLLLHLSVCLLW). At 136 to 169 (RRVCRLLLRQCAASGSNAISAPSSSSVSQLNTCA) the chain is on the cytoplasmic side. The chain crosses the membrane as a helical span at residues 170–190 (FVASLLFAVHPVHTEAVTGVV). Over 191–192 (GR) the chain is Extracellular. A helical membrane pass occupies residues 193–213 (AELLSSICFLAAFLSYAKSVG). Over 214-222 (DSGCPRRTN) the chain is Cytoplasmic. Transmembrane regions (helical) follow at residues 223-239 (WLTL…ASML) and 240-259 (CKEQ…LFVV). Topologically, residues 260–303 (HQLRPLHLCHFVLRLFDERTEQQSPKLANPSGIRRWSSSTLWKR) are cytoplasmic. A helical membrane pass occupies residues 304 to 324 (LSFLVGITLTLLVGRVYVMGS). Over 325–345 (QLPIFTRFDNPASAADTPERQ) the chain is Extracellular. Residues 346–366 (LTYGYLIYLNCWLLLCPSLLC) form a helical membrane-spanning segment. Topologically, residues 367 to 384 (CDWTMGTVPLLQGFTDSR) are cytoplasmic. The chain crosses the membrane as a helical span at residues 385–405 (NITTLLTFLALGAMVAKTCFT). Topologically, residues 406–419 (RNLALSRTLIMCLG) are extracellular. A helical transmembrane segment spans residues 420–440 (WMVLPFLPASNLFFPVGFVVA). Residues 441-442 (ER) lie on the Cytoplasmic side of the membrane. A helical membrane pass occupies residues 443-463 (ILYMPSMGYCLLVAYGFEQLQ). Residues 464–926 (RRGSLSWQRF…RPTHKSRKRS (463 aa)) lie on the Extracellular side of the membrane. 9 TPR repeats span residues 514-547 (AKLY…QTDD), 548-581 (IGAH…FPQA), 596-630 (LNVF…RSDY), 631-664 (VQAY…DNEN), 665-698 (ADIY…YPEH), 736-769 (EKVY…KADF), 770-803 (RSAL…HPSH), 805-838 (KGLI…DPHN), and 839-872 (TQGL…APAE). N609 and N645 each carry an N-linked (GlcNAc...) asparagine glycan.

The protein belongs to the TMTC family.

It localises to the membrane. Its subcellular location is the endoplasmic reticulum. The catalysed reaction is a di-trans,poly-cis-dolichyl beta-D-mannosyl phosphate + L-seryl-[protein] = 3-O-(alpha-D-mannosyl)-L-seryl-[protein] + a di-trans,poly-cis-dolichyl phosphate + H(+). It catalyses the reaction a di-trans,poly-cis-dolichyl beta-D-mannosyl phosphate + L-threonyl-[protein] = 3-O-(alpha-D-mannosyl)-L-threonyl-[protein] + a di-trans,poly-cis-dolichyl phosphate + H(+). The protein operates within protein modification; protein glycosylation. Transfers mannosyl residues to the hydroxyl group of serine or threonine residues. The polypeptide is Protein O-mannosyl-transferase Tmtc3 (Drosophila melanogaster (Fruit fly)).